The sequence spans 356 residues: Histidinol-phosphate aminotransferase (356 aa).

K214 is modified (N6-(pyridoxal phosphate)lysine).

Belongs to the class-II pyridoxal-phosphate-dependent aminotransferase family. Histidinol-phosphate aminotransferase subfamily. As to quaternary structure, homodimer. Pyridoxal 5'-phosphate is required as a cofactor.

It carries out the reaction L-histidinol phosphate + 2-oxoglutarate = 3-(imidazol-4-yl)-2-oxopropyl phosphate + L-glutamate. Its pathway is amino-acid biosynthesis; L-histidine biosynthesis; L-histidine from 5-phospho-alpha-D-ribose 1-diphosphate: step 7/9. This Shigella flexneri serotype 5b (strain 8401) protein is Histidinol-phosphate aminotransferase.